A 694-amino-acid chain; its full sequence is Long-chain-fatty-acid--CoA ligase 3 (694 aa).

The interval 1–25 is disordered; the sequence is MSEQHSVAVGKAANEHETAPRRNVR. Ser-2 is modified (N-acetylserine). 269–280 is an ATP binding site; it reads YTSGSISAPKGV. The FACS signature appears at 527 to 576; that stretch reads DGWFRTGDIVEWTPKGQLKIIDRRKNLVKTLNGEYIALEKLESVYRSNSY.

Belongs to the ATP-dependent AMP-binding enzyme family. As to quaternary structure, interacts with FRK1. Requires Mg(2+) as cofactor.

The protein resides in the cell membrane. The catalysed reaction is a long-chain fatty acid + ATP + CoA = a long-chain fatty acyl-CoA + AMP + diphosphate. It catalyses the reaction (9Z)-octadecenoate + ATP + CoA = (9Z)-octadecenoyl-CoA + AMP + diphosphate. The enzyme catalyses hexadecanoate + ATP + CoA = hexadecanoyl-CoA + AMP + diphosphate. It carries out the reaction (9Z)-hexadecenoate + ATP + CoA = (9Z)-hexadecenoyl-CoA + AMP + diphosphate. The catalysed reaction is (9Z)-tetradecenoate + ATP + CoA = (9Z)-tetradecenoyl-CoA + AMP + diphosphate. It catalyses the reaction (9Z,12Z)-octadecadienoate + ATP + CoA = (9Z,12Z)-octadecadienoyl-CoA + AMP + diphosphate. Activates endogenous long-chain fatty acids (LCFA) by esterification of the fatty acids into metabolically active CoA-thioesters for subsequent degradation or incorporation into phospholipids. Acts preferentially on C16 and C18 fatty acids with a cis-double bond at C-9-C-10. This chain is Long-chain-fatty-acid--CoA ligase 3 (FAA3), found in Saccharomyces cerevisiae (strain ATCC 204508 / S288c) (Baker's yeast).